Reading from the N-terminus, the 1217-residue chain is Nuclear matrix constituent protein 1 (1217 aa).

A compositionally biased stretch (polar residues) spans 1–14 (MLTPQRSAWSLKSK). The disordered stretch occupies residues 1–45 (MLTPQRSAWSLKSKVSSEKPRSKGKGITKNLDSAATPFPPLGLLN). A coiled-coil region spans residues 159 to 746 (VTDLEKALRE…KNQRAEFIKE (588 aa)). A compositionally biased stretch (low complexity) spans 892–904 (SEDAAANDNNPAA). 4 disordered regions span residues 892–969 (SEDA…VVDD), 981–1057 (EEAK…VQAP), 1087–1117 (VQTKASHQASHDNNQISMGDDPALEGSHKVT), and 1152–1217 (ISEM…FFTT). Over residues 947–960 (STRRGRGGKTVRRT) the composition is skewed to basic residues. 2 stretches are compositionally biased toward polar residues: residues 986-1007 (SSQQNDEQSQGASVHTGGTSNT) and 1087-1103 (VQTKASHQASHDNNQIS). Positions 1173–1186 (EEPATPSSGSSTSG) are enriched in low complexity. Acidic residues predominate over residues 1189-1200 (GNDDDMDDDDEE).

It belongs to the CRWN family.

It localises to the nucleus matrix. It is found in the nucleus lamina. Functionally, architectural component of nuclear structure that plays different roles in controlling nuclear size and morphology. Involved in the organization of multimeric complexes in the peripheral nucleoskeleton. The protein is Nuclear matrix constituent protein 1 of Allium cepa (Onion).